Reading from the N-terminus, the 121-residue chain is Ribonuclease P protein component (121 aa).

It belongs to the RnpA family. As to quaternary structure, consists of a catalytic RNA component (M1 or rnpB) and a protein subunit.

It carries out the reaction Endonucleolytic cleavage of RNA, removing 5'-extranucleotides from tRNA precursor.. Functionally, RNaseP catalyzes the removal of the 5'-leader sequence from pre-tRNA to produce the mature 5'-terminus. It can also cleave other RNA substrates such as 4.5S RNA. The protein component plays an auxiliary but essential role in vivo by binding to the 5'-leader sequence and broadening the substrate specificity of the ribozyme. This Neisseria gonorrhoeae (strain ATCC 700825 / FA 1090) protein is Ribonuclease P protein component.